Reading from the N-terminus, the 993-residue chain is DNA-binding protein SMUBP-2 (993 aa).

Ala-2 carries the N-acetylalanine modification. Residues 213-220, Gln-402, Tyr-441, and Glu-570 contribute to the ATP site; that span reads GPPGTGKT. The SS DNA-binding stretch occupies residues 637–783; that stretch reads TAFEYLDDIV…KARHITVSRR (147 aa). Disordered regions lie at residues 650-723, 765-815, and 837-872; these read YTHE…GPDR, LRHD…EPVT, and RQQS…KGPV. Polar residues-rich tracts occupy residues 667-683 and 703-716; these read PSTS…SGQE and HVQS…NGSD. Residues 721-784 enclose the R3H domain; the sequence is PDRTEHFRAT…ARHITVSRRS (64 aa). A compositionally biased stretch (basic and acidic residues) spans 765–775; it reads LRHDSTGEGKA. Residues 784 to 794 show a composition bias toward low complexity; that stretch reads SPASSGSVAPQ. Phosphoserine occurs at positions 797 and 800. The segment covering 837 to 847 has biased composition (polar residues); the sequence is RQQSSQAQTAK. A Nuclear localization signal motif is present at residues 862 to 866; that stretch reads KKKKK. The AN1-type; degenerate zinc-finger motif lies at 889–938; sequence VKADNTCSFSKCSVSTTTLGQFCMHCSHRYYLSHHLPEIHGCGEKARAHA. Zn(2+)-binding residues include Cys-911, Cys-914, His-928, and Cys-930. Residues 953 to 993 are disordered; the sequence is GTKDRALDPAKRAQLQRRLDKKLGELSSQRTSRKKEKERGT. Basic and acidic residues predominate over residues 954 to 976; it reads TKDRALDPAKRAQLQRRLDKKLG.

The protein belongs to the DNA2/NAM7 helicase family. In terms of assembly, homooligomer. Interacts with RUVBL1. Interacts with RUVBL2. Interacts with GTF3C1. Interacts with ABT1. Interacts with ribosomes. In terms of tissue distribution, in all tissues examined.

It localises to the nucleus. Its subcellular location is the cytoplasm. The protein localises to the cell projection. It is found in the axon. The catalysed reaction is ATP + H2O = ADP + phosphate + H(+). Functionally, 5' to 3' helicase that unwinds RNA and DNA duplexes in an ATP-dependent reaction. Specific to 5'-phosphorylated single-stranded guanine-rich sequences. May play a role in RNA metabolism, ribosome biogenesis or initiation of translation. May play a role in regulation of transcription. Interacts with tRNA-Tyr. The polypeptide is DNA-binding protein SMUBP-2 (Ighmbp2) (Mus musculus (Mouse)).